We begin with the raw amino-acid sequence, 179 residues long: NADH-quinone oxidoreductase subunit B (179 aa).

The [4Fe-4S] cluster site is built by C53, C54, C118, and C148.

It belongs to the complex I 20 kDa subunit family. As to quaternary structure, NDH-1 is composed of 14 different subunits. Subunits NuoB, C, D, E, F, and G constitute the peripheral sector of the complex. The cofactor is [4Fe-4S] cluster.

It is found in the cell membrane. It catalyses the reaction a quinone + NADH + 5 H(+)(in) = a quinol + NAD(+) + 4 H(+)(out). In terms of biological role, NDH-1 shuttles electrons from NADH, via FMN and iron-sulfur (Fe-S) centers, to quinones in the respiratory chain. The immediate electron acceptor for the enzyme in this species is believed to be a menaquinone. Couples the redox reaction to proton translocation (for every two electrons transferred, four hydrogen ions are translocated across the cytoplasmic membrane), and thus conserves the redox energy in a proton gradient. In Bacillus thuringiensis (strain Al Hakam), this protein is NADH-quinone oxidoreductase subunit B.